The primary structure comprises 1187 residues: DNA-directed RNA polymerase subunit beta (1187 aa).

The segment at 1150 to 1187 (KDEDDDPASSADDLGFNIGARPDAAAKEDQKAEEPEYQ) is disordered. Positions 1173–1187 (AAAKEDQKAEEPEYQ) are enriched in basic and acidic residues.

Belongs to the RNA polymerase beta chain family. The RNAP catalytic core consists of 2 alpha, 1 beta, 1 beta' and 1 omega subunit. When a sigma factor is associated with the core the holoenzyme is formed, which can initiate transcription.

It catalyses the reaction RNA(n) + a ribonucleoside 5'-triphosphate = RNA(n+1) + diphosphate. In terms of biological role, DNA-dependent RNA polymerase catalyzes the transcription of DNA into RNA using the four ribonucleoside triphosphates as substrates. This chain is DNA-directed RNA polymerase subunit beta, found in Bifidobacterium longum (strain NCC 2705).